The primary structure comprises 294 residues: N-acetylmuramic acid 6-phosphate etherase (294 aa).

The SIS domain maps to 54-217; sequence VIASFRKGGR…STTSMIGVGK (164 aa). Glu-82 (proton donor) is an active-site residue. Glu-113 is an active-site residue.

This sequence belongs to the GCKR-like family. MurNAc-6-P etherase subfamily. As to quaternary structure, homodimer.

The catalysed reaction is N-acetyl-D-muramate 6-phosphate + H2O = N-acetyl-D-glucosamine 6-phosphate + (R)-lactate. The protein operates within amino-sugar metabolism; N-acetylmuramate degradation. Its function is as follows. Specifically catalyzes the cleavage of the D-lactyl ether substituent of MurNAc 6-phosphate, producing GlcNAc 6-phosphate and D-lactate. This is N-acetylmuramic acid 6-phosphate etherase from Exiguobacterium sp. (strain ATCC BAA-1283 / AT1b).